Consider the following 261-residue polypeptide: Carbonic anhydrase 1 (261 aa).

Residues 1-40 (MASPDWGYDDKNGPEQWSKLYPIANGNNQSPVDIKTSETK) form a disordered region. Ala2 bears the N-acetylalanine mark. Residues 4–261 (PDWGYDDKNG…LKGRTVRASF (258 aa)) enclose the Alpha-carbonic anhydrase domain. The active-site Proton donor/acceptor is the His65. Zn(2+) contacts are provided by His95, His97, and His120. Substrate is bound by residues Thr200 and 200–201 (TH). The tract at residues 241 to 261 (PMQHNNRPTQPLKGRTVRASF) is disordered.

It belongs to the alpha-carbonic anhydrase family. It depends on Zn(2+) as a cofactor.

It is found in the cytoplasm. It catalyses the reaction hydrogencarbonate + H(+) = CO2 + H2O. The catalysed reaction is urea = cyanamide + H2O. Inhibited by acetazolamide. Its function is as follows. Catalyzes the reversible hydration of carbon dioxide. Can hydrate cyanamide to urea. This is Carbonic anhydrase 1 (CA1) from Pan troglodytes (Chimpanzee).